The sequence spans 328 residues: Malate dehydrogenase (328 aa).

13-19 (GGTGQIA) serves as a coordination point for NAD(+). Positions 94 and 100 each coordinate substrate. NAD(+) is bound by residues Asn-107, Gln-114, and 131–133 (VGN). 2 residues coordinate substrate: Asn-133 and Arg-164. His-189 acts as the Proton acceptor in catalysis.

It belongs to the LDH/MDH superfamily. MDH type 2 family.

It carries out the reaction (S)-malate + NAD(+) = oxaloacetate + NADH + H(+). In terms of biological role, catalyzes the reversible oxidation of malate to oxaloacetate. The chain is Malate dehydrogenase from Chlamydia felis (strain Fe/C-56) (Chlamydophila felis).